Reading from the N-terminus, the 288-residue chain is ATP synthase gamma chain (288 aa).

The protein belongs to the ATPase gamma chain family. In terms of assembly, F-type ATPases have 2 components, CF(1) - the catalytic core - and CF(0) - the membrane proton channel. CF(1) has five subunits: alpha(3), beta(3), gamma(1), delta(1), epsilon(1). CF(0) has three main subunits: a, b and c.

It localises to the cell inner membrane. Produces ATP from ADP in the presence of a proton gradient across the membrane. The gamma chain is believed to be important in regulating ATPase activity and the flow of protons through the CF(0) complex. The chain is ATP synthase gamma chain from Vesicomyosocius okutanii subsp. Calyptogena okutanii (strain HA).